Here is an 88-residue protein sequence, read N- to C-terminus: Large ribosomal subunit protein uL29 (88 aa).

Belongs to the universal ribosomal protein uL29 family.

The protein is Large ribosomal subunit protein uL29 (rpl29) of Sulfurisphaera tokodaii (strain DSM 16993 / JCM 10545 / NBRC 100140 / 7) (Sulfolobus tokodaii).